Reading from the N-terminus, the 401-residue chain is F-box protein At2g43440 (401 aa).

Positions 7-53 constitute an F-box domain; that stretch reads NTNSIYIVPELLEDIFLRLPLKSILKFKTVSRQWRSILESKLFVERR.

The protein is F-box protein At2g43440 of Arabidopsis thaliana (Mouse-ear cress).